The chain runs to 316 residues: Pantothenate kinase (316 aa).

95 to 102 lines the ATP pocket; sequence GSVAVGKS.

The protein belongs to the prokaryotic pantothenate kinase family.

The protein resides in the cytoplasm. It catalyses the reaction (R)-pantothenate + ATP = (R)-4'-phosphopantothenate + ADP + H(+). Its pathway is cofactor biosynthesis; coenzyme A biosynthesis; CoA from (R)-pantothenate: step 1/5. This is Pantothenate kinase from Salmonella choleraesuis (strain SC-B67).